The chain runs to 256 residues: POU domain class 2-associating factor 1 (256 aa).

The segment at 1-24 is disordered; the sequence is MLWQKSTAPEQAPAPPRPYQGVRV. The region spanning 16 to 38 is the OCA domain; the sequence is PRPYQGVRVKEPVKELLRRKRGH.

Belongs to the POU2AF family. Interacts with POU2F1/OCT1 and POU2F2/OCT2; the interaction increases POU2F1 and POU2F2 transactivation activity. Ubiquitinated; mediated by SIAH1 or SIAH2 and leading to its subsequent proteasomal degradation. As to expression, B-cell specific.

The protein resides in the nucleus. Its function is as follows. Transcriptional coactivator that specifically associates with either POU2F1/OCT1 or POU2F2/OCT2. It boosts the POU2F1/OCT1 mediated promoter activity and to a lesser extent, that of POU2F2/OCT2. It recognizes the POU domains of POU2F1/OCT1 and POU2F2/OCT2. It is essential for the response of B-cells to antigens and required for the formation of germinal centers. Regulates IL6 expression in B cells as POU2F2/OCT2 coactivator. This is POU domain class 2-associating factor 1 from Mus musculus (Mouse).